Reading from the N-terminus, the 46-residue chain is PhoP/PhoQ regulator MgrB (46 aa).

A helical membrane pass occupies residues 6–26 (WVALVVVVLACLLLWAQVFNM).

The protein belongs to the MgrB family. In terms of assembly, may form homooligomers. Probably interacts with the periplasmic domain of PhoQ.

The protein localises to the cell inner membrane. Its function is as follows. PhoP-regulated transcription is redox-sensitive, being activated when the periplasm becomes more reducing. MgrB acts between DsbA/DsbB and PhoP/PhoQ in this pathway. Represses PhoP/PhoQ signaling, possibly by binding to the periplasmic domain of PhoQ, altering its activity and that of downstream effector PhoP. In Escherichia coli O6:K15:H31 (strain 536 / UPEC), this protein is PhoP/PhoQ regulator MgrB.